The primary structure comprises 185 residues: Ribose 1,5-bisphosphate phosphokinase PhnN (185 aa).

10–17 (GPSGSGKD) contacts ATP.

This sequence belongs to the ribose 1,5-bisphosphokinase family.

The enzyme catalyses alpha-D-ribose 1,5-bisphosphate + ATP = 5-phospho-alpha-D-ribose 1-diphosphate + ADP. It functions in the pathway metabolic intermediate biosynthesis; 5-phospho-alpha-D-ribose 1-diphosphate biosynthesis; 5-phospho-alpha-D-ribose 1-diphosphate from D-ribose 5-phosphate (route II): step 3/3. In terms of biological role, catalyzes the phosphorylation of ribose 1,5-bisphosphate to 5-phospho-D-ribosyl alpha-1-diphosphate (PRPP). The protein is Ribose 1,5-bisphosphate phosphokinase PhnN of Escherichia coli O157:H7.